We begin with the raw amino-acid sequence, 491 residues long: Cytosolic Fe-S cluster assembly factor NAR1 (491 aa).

Residues cysteine 20, cysteine 59, cysteine 62, cysteine 65, cysteine 177, cysteine 231, cysteine 412, and cysteine 416 each coordinate [4Fe-4S] cluster.

The protein belongs to the NARF family. In terms of assembly, interacts with CIA1.

It is found in the cytoplasm. It localises to the nucleus. Essential component of a cytosolic Fe/S protein assembly machinery. Required for maturation of extramitochondrial Fe/S proteins. May play a role in the transfer of pre-assembled Fe/S clusters to target apoproteins. The protein is Cytosolic Fe-S cluster assembly factor NAR1 (NAR1) of Saccharomyces cerevisiae (strain ATCC 204508 / S288c) (Baker's yeast).